Consider the following 169-residue polypeptide: 16S rRNA aminocarboxypropyltransferase (169 aa).

T15, V65, L88, and T107 together coordinate S-adenosyl-L-methionine.

This sequence belongs to the TDD superfamily. TSR3 family.

It is found in the cytoplasm. The catalysed reaction is an N(1)-methylpseudouridine in rRNA + S-adenosyl-L-methionine = N(1)-methyl-N(3)-[(3S)-3-amino-3-carboxypropyl]pseudouridine in rRNA + S-methyl-5'-thioadenosine + H(+). Aminocarboxypropyltransferase that catalyzes the aminocarboxypropyl transfer on pseudouridine corresponding to position 914 in M.jannaschii 16S rRNA. It constitutes the last step in biosynthesis of the hypermodified N1-methyl-N3-(3-amino-3-carboxypropyl) pseudouridine (m1acp3-Psi). In Methanopyrus kandleri (strain AV19 / DSM 6324 / JCM 9639 / NBRC 100938), this protein is 16S rRNA aminocarboxypropyltransferase.